A 245-amino-acid chain; its full sequence is tRNA (guanine-N(1)-)-methyltransferase (245 aa).

S-adenosyl-L-methionine contacts are provided by residues glycine 111 and 131 to 136 (MGDYVL).

It belongs to the RNA methyltransferase TrmD family. As to quaternary structure, homodimer.

It localises to the cytoplasm. The enzyme catalyses guanosine(37) in tRNA + S-adenosyl-L-methionine = N(1)-methylguanosine(37) in tRNA + S-adenosyl-L-homocysteine + H(+). In terms of biological role, specifically methylates guanosine-37 in various tRNAs. In Staphylococcus aureus (strain USA300), this protein is tRNA (guanine-N(1)-)-methyltransferase.